Consider the following 563-residue polypeptide: Arginine--tRNA ligase (563 aa).

A 'HIGH' region motif is present at residues 121–131 (PNIAKPFSIGH).

The protein belongs to the class-I aminoacyl-tRNA synthetase family. Monomer.

It localises to the cytoplasm. It catalyses the reaction tRNA(Arg) + L-arginine + ATP = L-arginyl-tRNA(Arg) + AMP + diphosphate. The polypeptide is Arginine--tRNA ligase (argS) (Streptococcus pneumoniae serotype 4 (strain ATCC BAA-334 / TIGR4)).